The primary structure comprises 158 residues: Rhombotin-2 (158 aa).

LIM zinc-binding domains are found at residues 30–89 (CGGC…RLFG) and 94–153 (CASC…EWTK).

Interacts with BEX2 and KDM5A. Interacts via its LIM domains with ELF2 and LDB1. Also interacts with basic helix-loop-helix protein TAL1/SCL and can assemble in a complex with LMO2 and TAL1/SCL. As to expression, expressed in early mouse development in central nervous system, lung, kidney, liver and spleen but only very low levels occur in thymus.

It localises to the nucleus. In terms of biological role, acts with TAL1/SCL to regulate red blood cell development. Also acts with LDB1 to maintain erythroid precursors in an immature state. This is Rhombotin-2 (Lmo2) from Mus musculus (Mouse).